A 263-amino-acid chain; its full sequence is N-acyl homoserine lactonase AttM (263 aa).

7 residues coordinate Zn(2+): His103, His105, Asp107, His108, His180, Asp202, and His247.

Belongs to the metallo-beta-lactamase superfamily. It depends on Zn(2+) as a cofactor.

The catalysed reaction is an N-acyl-L-homoserine lactone + H2O = an N-acyl-L-homoserine + H(+). In Rhizobium johnstonii (strain DSM 114642 / LMG 32736 / 3841) (Rhizobium leguminosarum bv. viciae), this protein is N-acyl homoserine lactonase AttM.